We begin with the raw amino-acid sequence, 496 residues long: Squalene epoxidase ERG1 (496 aa).

Residues 4–24 form a helical membrane-spanning segment; sequence VKYDAIIIGAGVIGPTIATAF. FAD-binding positions include 15 to 16, 35 to 36, arginine 43, arginine 148, valine 164, aspartate 332, and methionine 345; these read VI and ER. A run of 2 helical transmembrane segments spans residues 431–451 and 466–486; these read IGLL…FFSV and LGFP…IVIF.

This sequence belongs to the squalene monooxygenase family. Requires FAD as cofactor.

The protein resides in the microsome membrane. Its subcellular location is the endoplasmic reticulum membrane. It catalyses the reaction squalene + reduced [NADPH--hemoprotein reductase] + O2 = (S)-2,3-epoxysqualene + oxidized [NADPH--hemoprotein reductase] + H2O + H(+). It participates in terpene metabolism; lanosterol biosynthesis; lanosterol from farnesyl diphosphate: step 2/3. Activity is completely abolished by Triton X-100, deoxycholate or Cu(2+), and partially inhibited by thiol reagents, rotenone and antimycin A. The allylamine antimycotic agents naftifine and SF 86-327are potent inhibitors and show apparently non-competitive kinetics with respect to the substrate squalene. Squalene epoxidase; part of the third module of ergosterol biosynthesis pathway that includes the late steps of the pathway. Erg1 catalyzes the epoxidation of squalene into 2,3-epoxysqualene. The third module or late pathway involves the ergosterol synthesis itself through consecutive reactions that mainly occur in the endoplasmic reticulum (ER) membrane. Firstly, the squalene synthase ERG9 catalyzes the condensation of 2 farnesyl pyrophosphate moieties to form squalene, which is the precursor of all steroids. Squalene synthase is crucial for balancing the incorporation of farnesyl diphosphate (FPP) into sterol and nonsterol isoprene synthesis. Secondly, the squalene epoxidase ERG1 catalyzes the stereospecific oxidation of squalene to (S)-2,3-epoxysqualene, which is considered to be a rate-limiting enzyme in steroid biosynthesis. Then, the lanosterol synthase ERG7 catalyzes the cyclization of (S)-2,3 oxidosqualene to lanosterol, a reaction that forms the sterol core. In the next steps, lanosterol is transformed to zymosterol through a complex process involving various demethylation, reduction and desaturation reactions. The lanosterol 14-alpha-demethylase ERG11 (also known as CYP51) catalyzes C14-demethylation of lanosterol to produce 4,4'-dimethyl cholesta-8,14,24-triene-3-beta-ol, which is critical for ergosterol biosynthesis. The C-14 reductase ERG24 reduces the C14=C15 double bond of 4,4-dimethyl-cholesta-8,14,24-trienol to produce 4,4-dimethyl-cholesta-8,24-dienol. 4,4-dimethyl-cholesta-8,24-dienol is substrate of the C-4 demethylation complex ERG25-ERG26-ERG27 in which ERG25 catalyzes the three-step monooxygenation required for the demethylation of 4,4-dimethyl and 4alpha-methylsterols, ERG26 catalyzes the oxidative decarboxylation that results in a reduction of the 3-beta-hydroxy group at the C-3 carbon to an oxo group, and ERG27 is responsible for the reduction of the keto group on the C-3. ERG28 has a role as a scaffold to help anchor ERG25, ERG26 and ERG27 to the endoplasmic reticulum and ERG29 regulates the activity of the iron-containing C4-methylsterol oxidase ERG25. Then, the sterol 24-C-methyltransferase ERG6 catalyzes the methyl transfer from S-adenosyl-methionine to the C-24 of zymosterol to form fecosterol. The C-8 sterol isomerase ERG2 catalyzes the reaction which results in unsaturation at C-7 in the B ring of sterols and thus converts fecosterol to episterol. The sterol-C5-desaturase ERG3 then catalyzes the introduction of a C-5 double bond in the B ring to produce 5-dehydroepisterol. The C-22 sterol desaturase ERG5 further converts 5-dehydroepisterol into ergosta-5,7,22,24(28)-tetraen-3beta-ol by forming the C-22(23) double bond in the sterol side chain. Finally, ergosta-5,7,22,24(28)-tetraen-3beta-ol is substrate of the C-24(28) sterol reductase ERG4 to produce ergosterol. The polypeptide is Squalene epoxidase ERG1 (Candida albicans (strain SC5314 / ATCC MYA-2876) (Yeast)).